We begin with the raw amino-acid sequence, 218 residues long: UPF0502 protein CJA_1529 (218 aa).

It belongs to the UPF0502 family.

In Cellvibrio japonicus (strain Ueda107) (Pseudomonas fluorescens subsp. cellulosa), this protein is UPF0502 protein CJA_1529.